A 155-amino-acid polypeptide reads, in one-letter code: 6,7-dimethyl-8-ribityllumazine synthase (155 aa).

Residues F22, A56–E58, and A80–I82 contribute to the 5-amino-6-(D-ribitylamino)uracil site. S85–T86 lines the (2S)-2-hydroxy-3-oxobutyl phosphate pocket. The Proton donor role is filled by H88. Position 113 (F113) interacts with 5-amino-6-(D-ribitylamino)uracil. R127 is a (2S)-2-hydroxy-3-oxobutyl phosphate binding site.

It belongs to the DMRL synthase family.

It catalyses the reaction (2S)-2-hydroxy-3-oxobutyl phosphate + 5-amino-6-(D-ribitylamino)uracil = 6,7-dimethyl-8-(1-D-ribityl)lumazine + phosphate + 2 H2O + H(+). It participates in cofactor biosynthesis; riboflavin biosynthesis; riboflavin from 2-hydroxy-3-oxobutyl phosphate and 5-amino-6-(D-ribitylamino)uracil: step 1/2. Catalyzes the formation of 6,7-dimethyl-8-ribityllumazine by condensation of 5-amino-6-(D-ribitylamino)uracil with 3,4-dihydroxy-2-butanone 4-phosphate. This is the penultimate step in the biosynthesis of riboflavin. In Bifidobacterium longum subsp. infantis (strain ATCC 15697 / DSM 20088 / JCM 1222 / NCTC 11817 / S12), this protein is 6,7-dimethyl-8-ribityllumazine synthase.